The sequence spans 518 residues: Major facilitator superfamily multidrug transporter mfsC (518 aa).

7 consecutive transmembrane segments (helical) span residues 27–47, 65–85, 88–108, 123–143, 152–172, 183–203, and 212–232; these read VLLT…SVLF, WVLI…GQLG, FGLE…NVIN, ISGV…SNTF, ALAI…VVGS, IFWL…LFLP, and PIDI…VYGL. Asparagine 233 carries an N-linked (GlcNAc...) asparagine glycan. Helical transmembrane passes span 242-262, 281-301, 315-335, 347-367, 380-400, 409-429, and 455-475; these read SAAM…FLWV, FLVM…WFFI, ILTA…GVFA, ILVA…FAGP, TAII…SILL, AVAG…ILAG, and AFWL…VCYW.

Belongs to the major facilitator superfamily. EmrB family.

The protein resides in the membrane. Major facilitator superfamily transporter that may be involved in A.fumigatus adaptation to azoles such as vorizonazole. The chain is Major facilitator superfamily multidrug transporter mfsC from Aspergillus fumigatus (strain ATCC MYA-4609 / CBS 101355 / FGSC A1100 / Af293) (Neosartorya fumigata).